Here is a 449-residue protein sequence, read N- to C-terminus: POU domain, class 5, transcription factor 1.1 (449 aa).

2 disordered regions span residues 79–125 (ENNQ…SPPN) and 170–233 (YPTP…PSES). Residues 97–110 (SRIKVKEEVVHETD) show a composition bias toward basic and acidic residues. The segment covering 170–180 (YPTPANQSPNT) has biased composition (polar residues). The segment covering 187-199 (SSMESSRCSSTNS) has biased composition (low complexity). Positions 224–233 (DNEEEVPSES) are enriched in acidic residues. One can recognise a POU-specific domain in the interval 227-301 (EEVPSESEME…FLERWVVEAE (75 aa)). Residues 321–380 (KRKRRTNIENIVKGTLESYFMKCPKPGAQEMVQIAKELNMDKDVVRVWFCNRRQKGKRQG) constitute a DNA-binding region (homeobox).

The protein belongs to the POU transcription factor family. Class-5 subfamily. In terms of assembly, interacts with components of the transcription complex that assembles on the vent2-B gene, including vent2 (via C-terminus), smad1 and smad4. Forms a repression complex on the promoters of the gsc and mix2 genes via interactions with the nodal/activin signaling pathway transducers foxh1/fast1, gtf2ird1/wbscr11 and smad2. Forms a repression complex on the promoters of the nodal/nr1 and siamois genes with the maternal factors tcf7l1/tcf3 and vegt. As to expression, highly enriched within the animal half of developing embryos within ectodermal and mesodermal regions. Expressed in the neuroectoderm at the early neurula stage, with expression initially extending to the future hindbrain/midbrain boundary, but later shifting toward the posterior pole where it persists within the tip of the tail in hatching embryos. Expressed at very low levels in the adult kidney.

It is found in the nucleus. Functionally, transcription factor that binds to the octamer motif (5'-ATTTGCAT-3'). Activates transcription when directly bound to the octamer DNA sequence, but can form repression complexes with other proteins at the promoter site to inhibit transcription. Binds to the promoter of the vent2-B gene to activate transcription when in the presence of other BMP signaling factors also bound to the promoter. Inhibits the competence of ectodermal cells to respond to BMP during embryogenesis thereby inhibiting epidermal differentiation and promoting neural induction. Antagonizes the activity of nodal/activin signaling by forming a transcriptional repression complex on the gsc and mix2 gene promoters to inhibit their transcription, and thus maintain the undifferentiated state of embryonic cells to prevent them from differentiating prematurely. Acts maternally to inhibit vegt and beta-catenin-activated gene transcription by forming a transcriptional repression complex on the nodal/nr1 and siamois promoters to inhibit their transcription. The polypeptide is POU domain, class 5, transcription factor 1.1 (pou5f1.1) (Xenopus laevis (African clawed frog)).